Here is a 356-residue protein sequence, read N- to C-terminus: Histidinol-phosphate aminotransferase (356 aa).

At Lys-214 the chain carries N6-(pyridoxal phosphate)lysine.

This sequence belongs to the class-II pyridoxal-phosphate-dependent aminotransferase family. Histidinol-phosphate aminotransferase subfamily. As to quaternary structure, homodimer. Pyridoxal 5'-phosphate is required as a cofactor.

The enzyme catalyses L-histidinol phosphate + 2-oxoglutarate = 3-(imidazol-4-yl)-2-oxopropyl phosphate + L-glutamate. It functions in the pathway amino-acid biosynthesis; L-histidine biosynthesis; L-histidine from 5-phospho-alpha-D-ribose 1-diphosphate: step 7/9. The chain is Histidinol-phosphate aminotransferase from Escherichia coli (strain 55989 / EAEC).